The following is an 893-amino-acid chain: Dolichyl-phosphate-mannose--protein mannosyltransferase 1 (893 aa).

A run of 7 helical transmembrane segments spans residues 29-49, 77-97, 124-144, 147-167, 170-190, 224-244, and 258-278; these read FSFLDYVVVIFLTVVAFCVRA, LLMDVYPPLGKLLFSLVAALT, LFTCLLGSLLVPLMYGTVYFP, SKTAASLAALFVIFDNGLITM, YIMIEIPALYFMSLTAFYWSV, AMFTFGWLLILAAFHLWNLLG, and FSYIFYLIGVPITVYLAVFAV. Residues 310–364 form the MIR 1 domain; that stretch reads FADVAYGSLVTIRNAIPEHGYLHSSELLYPEGTEQQIISLVDEPNQNALWIIEHE. Residue asparagine 370 is glycosylated (N-linked (GlcNAc...) asparagine). 2 MIR domains span residues 374–433 and 443–499; these read IELL…IQIL and NGTV…IESN. A glycan (N-linked (GlcNAc...) asparagine) is linked at asparagine 443. Phosphothreonine is present on threonine 451. Helical transmembrane passes span 573-593, 610-630, and 643-663; these read FVWYSVISLVAFFVIVQIFCL, YNYNIGKFVVAWLLHWAPYIL, and ALYFGIAALGVSWSFLGNAVF. Asparagine 665 is a glycosylation site (N-linked (GlcNAc...) asparagine). The chain crosses the membrane as a helical span at residues 671–691; the sequence is ALSVIIMALMFLVYRLYSPFT. An N-linked (GlcNAc...) asparagine glycan is attached at asparagine 720. The segment at 785 to 893 is disordered; sequence KAEQEAREAA…VAESAQARVE (109 aa). Positions 786–806 are enriched in basic and acidic residues; that stretch reads AEQEAREAAEKAASEAAERSS. 2 stretches are compositionally biased toward low complexity: residues 807 to 823 and 854 to 864; these read SEAAASSSSESVAAASV and MEAAALNNAAE. The segment covering 868-878 has biased composition (polar residues); the sequence is VVGSSPESVAS.

Belongs to the glycosyltransferase 39 family.

Its subcellular location is the endoplasmic reticulum membrane. The protein resides in the nucleus membrane. It catalyses the reaction a di-trans,poly-cis-dolichyl beta-D-mannosyl phosphate + L-seryl-[protein] = 3-O-(alpha-D-mannosyl)-L-seryl-[protein] + a di-trans,poly-cis-dolichyl phosphate + H(+). It carries out the reaction a di-trans,poly-cis-dolichyl beta-D-mannosyl phosphate + L-threonyl-[protein] = 3-O-(alpha-D-mannosyl)-L-threonyl-[protein] + a di-trans,poly-cis-dolichyl phosphate + H(+). The protein operates within protein modification; protein glycosylation. In terms of biological role, transfers mannose from Dol-P-mannose to Ser or Thr residues on proteins. Required for normal cell growth and septum formation. Shown to actively O-mannosylate wsc1. The protein is Dolichyl-phosphate-mannose--protein mannosyltransferase 1 (ogm1) of Schizosaccharomyces pombe (strain 972 / ATCC 24843) (Fission yeast).